Reading from the N-terminus, the 189-residue chain is MSSRGVRAAGTDGTDFQNRQRVAQHYQESAQYKSILKWFFVPHFLILVFMWLKVGSELLRTNFGWKNAFFDRLDMPSAYPWEYVWCFSFIPIVLAIYSFQRNKLKILHYAYYAEFVVGIFPCMIGLGGQLPELMEYAQDMEGSNTPTFKGIFPMVIIWYIFFAVALQIHGFSMYFMHHLAAAWAPVKRD.

Over 1–34 the chain is Cytoplasmic; the sequence is MSSRGVRAAGTDGTDFQNRQRVAQHYQESAQYKS. The chain crosses the membrane as a helical span at residues 35-55; that stretch reads ILKWFFVPHFLILVFMWLKVG. At 56 to 78 the chain is on the lumenal side; it reads SELLRTNFGWKNAFFDRLDMPSA. A helical transmembrane segment spans residues 79-99; the sequence is YPWEYVWCFSFIPIVLAIYSF. Residues 100 to 105 lie on the Cytoplasmic side of the membrane; the sequence is QRNKLK. A helical membrane pass occupies residues 106 to 126; sequence ILHYAYYAEFVVGIFPCMIGL. The Lumenal segment spans residues 127 to 150; that stretch reads GGQLPELMEYAQDMEGSNTPTFKG. Residues 151–171 form a helical membrane-spanning segment; that stretch reads IFPMVIIWYIFFAVALQIHGF. The Cytoplasmic segment spans residues 172 to 189; the sequence is SMYFMHHLAAAWAPVKRD.

The protein belongs to the jagunal family.

It localises to the endoplasmic reticulum membrane. This is Protein jagunal homolog from Caenorhabditis elegans.